Consider the following 439-residue polypeptide: Mitochondrial distribution and morphology protein 12 (439 aa).

Residues Met1–Val439 form the SMP-LTD domain. Disordered stretches follow at residues Pro65–Leu165 and Leu229–Ser284. A compositionally biased stretch (acidic residues) spans Phe69–Asp90. Positions Pro109–Gly121 are enriched in basic and acidic residues. Polar residues predominate over residues Leu229–Pro243.

This sequence belongs to the MDM12 family. As to quaternary structure, component of the ER-mitochondria encounter structure (ERMES) or MDM complex, composed of MMM1, MDM10, mdm12 and MDM34. An MMM1 homodimer associates with one molecule of mdm12 on each side in a pairwise head-to-tail manner, and the SMP-LTD domains of MMM1 and mdm12 generate a continuous hydrophobic tunnel for phospholipid trafficking.

The protein resides in the mitochondrion outer membrane. It is found in the endoplasmic reticulum membrane. Its function is as follows. Component of the ERMES/MDM complex, which serves as a molecular tether to connect the endoplasmic reticulum (ER) and mitochondria. Components of this complex are involved in the control of mitochondrial shape and protein biogenesis, and function in nonvesicular lipid trafficking between the ER and mitochondria. mdm12 is required for the interaction of the ER-resident membrane protein MMM1 and the outer mitochondrial membrane-resident beta-barrel protein MDM10. The mdm12-MMM1 subcomplex functions in the major beta-barrel assembly pathway that is responsible for biogenesis of all mitochondrial outer membrane beta-barrel proteins, and acts in a late step after the SAM complex. The MDM10-mdm12-MMM1 subcomplex further acts in the TOM40-specific pathway after the action of the mdm12-MMM1 complex. Essential for establishing and maintaining the structure of mitochondria and maintenance of mtDNA nucleoids. This Pyrenophora tritici-repentis (strain Pt-1C-BFP) (Wheat tan spot fungus) protein is Mitochondrial distribution and morphology protein 12.